The following is a 70-amino-acid chain: Probable protein transport protein Sec61 subunit gamma (70 aa).

Over 1-33 the chain is Cytoplasmic; that stretch reads MADNADDLFQIPKNFYKEGSHFIKRCVKPDRKE. Residues 34–62 traverse the membrane as a helical segment; sequence FLSISKAVATGFVLMGLIGYIIKLIHIPI. Residues 63-70 lie on the Extracellular side of the membrane; that stretch reads NKVLVGGA.

The protein belongs to the SecE/SEC61-gamma family. Heterotrimeric complex composed of SEC61-alpha, SEC61-beta and SEC61-gamma.

Its subcellular location is the endoplasmic reticulum membrane. Its function is as follows. Necessary for protein translocation in the endoplasmic reticulum. This chain is Probable protein transport protein Sec61 subunit gamma (sss1), found in Schizosaccharomyces pombe (strain 972 / ATCC 24843) (Fission yeast).